The sequence spans 669 residues: uncharacterized protein (669 aa).

A run of 6 helical transmembrane segments spans residues 39–61 (LCPL…GTSW), 124–146 (ISLW…LISI), 153–175 (GIIY…YALG), 190–212 (GLAF…FFGV), 221–243 (FAPG…QTAL), and 263–285 (IAAG…IRYL). 2 consecutive RCK C-terminal domains span residues 316 to 397 (AGSL…KLIG) and 398 to 483 (KESD…LGGR). The next 5 helical transmembrane spans lie at 484–506 (PILN…GYIF), 516–538 (IPFA…YWRS), 558–580 (IGLN…ESFH), 585–607 (IWVA…VVGI), and 645–667 (VPYP…FAML).

The protein belongs to the AAE transporter (TC 2.A.81) family.

It localises to the cell membrane. This is an uncharacterized protein from Desulfotalea psychrophila (strain LSv54 / DSM 12343).